The sequence spans 174 residues: Endoribonuclease YbeY (174 aa).

Residues His-129, His-133, and His-139 each contribute to the Zn(2+) site.

Belongs to the endoribonuclease YbeY family. Requires Zn(2+) as cofactor.

The protein localises to the cytoplasm. Single strand-specific metallo-endoribonuclease involved in late-stage 70S ribosome quality control and in maturation of the 3' terminus of the 16S rRNA. The polypeptide is Endoribonuclease YbeY (Lactobacillus helveticus (strain DPC 4571)).